A 189-amino-acid chain; its full sequence is Large ribosomal subunit protein bL9 (189 aa).

This sequence belongs to the bacterial ribosomal protein bL9 family.

Its function is as follows. Binds to the 23S rRNA. The sequence is that of Large ribosomal subunit protein bL9 from Methylocella silvestris (strain DSM 15510 / CIP 108128 / LMG 27833 / NCIMB 13906 / BL2).